We begin with the raw amino-acid sequence, 652 residues long: Vitrin (652 aa).

The first 26 residues, 1 to 26, serve as a signal peptide directing secretion; it reads MGIVVLTMKASVIEMFLVLLVTGIQS. An LCCL domain is found at 40-133; it reads TVPQISCDVR…LSLPRWRESF (94 aa). 2 disulfide bridges follow: cysteine 46–cysteine 62 and cysteine 66–cysteine 86. 2 disordered regions span residues 137 to 181 and 196 to 231; these read EGKP…AAQP and THTT…EPAL. Positions 145–158 are enriched in low complexity; that stretch reads TYPSSLTYSSSKSP. The span at 196–212 shows a compositional bias: polar residues; it reads THTTLPKPSPSAGSTAS. 2 VWFA domains span residues 267 to 452 and 469 to 638; these read DLSF…VKRV and DIGF…VPKV. A glycan (N-linked (GlcNAc...) asparagine) is linked at asparagine 494.

As to quaternary structure, binds dermatan sulfate and chondroitin sulfate.

Its subcellular location is the secreted. The protein localises to the extracellular space. The protein resides in the extracellular matrix. Promotes matrix assembly and cell adhesiveness. Plays a role in spinal cord formation by regulating the proliferation and differentiation of neural stem cells. The polypeptide is Vitrin (VIT) (Bos taurus (Bovine)).